The sequence spans 324 residues: Quinolinate synthase 1 (324 aa).

The iminosuccinate site is built by histidine 48 and serine 66. Residue cysteine 111 coordinates [4Fe-4S] cluster. Residues 137 to 139 (YVN) and serine 154 each bind iminosuccinate. Residue cysteine 196 coordinates [4Fe-4S] cluster. Iminosuccinate is bound by residues 222-224 (HPE) and threonine 239. Cysteine 282 is a [4Fe-4S] cluster binding site.

This sequence belongs to the quinolinate synthase family. Type 2 subfamily. The cofactor is [4Fe-4S] cluster.

It is found in the cytoplasm. It catalyses the reaction iminosuccinate + dihydroxyacetone phosphate = quinolinate + phosphate + 2 H2O + H(+). The protein operates within cofactor biosynthesis; NAD(+) biosynthesis; quinolinate from iminoaspartate: step 1/1. Catalyzes the condensation of iminoaspartate with dihydroxyacetone phosphate to form quinolinate. This chain is Quinolinate synthase 1, found in Mesorhizobium japonicum (strain LMG 29417 / CECT 9101 / MAFF 303099) (Mesorhizobium loti (strain MAFF 303099)).